A 283-amino-acid polypeptide reads, in one-letter code: Calpastatin (283 aa).

The span at 1 to 15 (MNPTETKAIPVSQQM) shows a compositional bias: polar residues. 2 disordered regions span residues 1–186 (MNPT…SDPM) and 212–283 (NEGI…KVEK). Residues 21–30 (PNKKKHKKQA) are compositionally biased toward basic residues. K32 participates in a covalent cross-link: Glycyl lysine isopeptide (Lys-Gly) (interchain with G-Cter in SUMO2). Residues 46–65 (VVHEKKSQEGKPKEHTEQKS) are compositionally biased toward basic and acidic residues. At K50 the chain carries N6-acetyllysine. At S87 the chain carries Phosphoserine. The segment covering 107–122 (VSAGGESVAGVAATSG) has biased composition (low complexity). Residue S133 is modified to Phosphoserine. T135 is modified (phosphothreonine). The stretch at 170-222 (IEEENTTYTGPEVSDPMSSTYIEELGKREVTIPPKYRELLAKNEGITGPPADS) is one Inhibitory domain 1 repeat. S222 and S243 each carry phosphoserine. The span at 249–258 (KKTEKEESTE) shows a compositional bias: basic and acidic residues.

This sequence belongs to the protease inhibitor I27 (calpastatin) family.

Specific inhibition of calpain (calcium-dependent cysteine protease). Plays a key role in postmortem tenderization of meat and have been proposed to be involved in muscle protein degradation in living tissue. This chain is Calpastatin (CAST), found in Chlorocebus aethiops (Green monkey).